The primary structure comprises 229 residues: MAKKSKQLRAALEKIDSTKAYSVEEAVALAKETNFAKFDATVEVAYNLNIDVKKADQQIRGAMVLPNGTGKTSRVLVFARGAKAEEAKVAGADFVGEDDLVAKINDGWLDFDVVIATPDMMALVGRLGRVLGPRNLMPNPKTGTVTMDVAKAVEESKGGKITYRADRAGNVQAIIGKVSFEAEKLVENFKAFNETIQKAKPATAKGTYVTNLTITTTQGVGIKVDVNSL.

It belongs to the universal ribosomal protein uL1 family. As to quaternary structure, part of the 50S ribosomal subunit.

In terms of biological role, binds directly to 23S rRNA. The L1 stalk is quite mobile in the ribosome, and is involved in E site tRNA release. Functionally, protein L1 is also a translational repressor protein, it controls the translation of the L11 operon by binding to its mRNA. In Streptococcus pneumoniae (strain JJA), this protein is Large ribosomal subunit protein uL1.